The primary structure comprises 557 residues: MAVQTDIEIARAARKKPIQEIGAGLGIPAEALIPYGHDKAKVGQGFIRGLEGRPDGKLILVTAINPTPAGEGKTTTTVGLGDGLNRIGKKAVICIREASLGPNFGMKGGAAGGGRAQVVPMEDMNLHFTGDFHAITAAHNLLAAMIDNHIYWGNALELDARRITWRRVMDMNDRALRDTVVNLGGVANGFPRQTGFDITVASEVMAILCLADDLEDLERRLGRIVVGYRRDKSPVYCRDLKAAGAMAVLLKDAMQPNLVQTIENNPAFVHGGPFANIAHGCNSVIATRTALKLADYVVTEAGFGADLGAEKFFDIKCRLAGLKPSAAVVVATVRALKMNGGVAREDLGREDVAALRRGCANLGRHIANVKGFGVPVVVAINHFTTDTEAEIEAVRAYAAGQGAEAFLCRHWAEGSAGIEDLAQKVVELAETPSMFAPLYPDDMPLFEKMETVARRIYHAHDVIADHVIRDQLRTWEEAGYGALPVCMAKTQYSFTTDAAIRGAPEGHSIPIREVRLAAGAGFVVAICGEIRTMPGLPSQPAAELIHLDEEGRIEGLF.

Residue 67 to 74 (TPAGEGKT) participates in ATP binding.

This sequence belongs to the formate--tetrahydrofolate ligase family.

It carries out the reaction (6S)-5,6,7,8-tetrahydrofolate + formate + ATP = (6R)-10-formyltetrahydrofolate + ADP + phosphate. Its pathway is one-carbon metabolism; tetrahydrofolate interconversion. The protein is Formate--tetrahydrofolate ligase of Cereibacter sphaeroides (strain ATCC 17029 / ATH 2.4.9) (Rhodobacter sphaeroides).